A 285-amino-acid polypeptide reads, in one-letter code: Ribose-phosphate pyrophosphokinase (285 aa).

ATP is bound by residues 33 to 35 (DGE) and 91 to 92 (RQ). Mg(2+)-binding residues include His-125 and Asp-162. Residue Lys-185 is part of the active site. D-ribose 5-phosphate-binding positions include Arg-187, Asp-211, and 215–219 (STGGT).

The protein belongs to the ribose-phosphate pyrophosphokinase family. Class III (archaeal) subfamily. Requires Mg(2+) as cofactor.

The protein resides in the cytoplasm. It catalyses the reaction D-ribose 5-phosphate + ATP = 5-phospho-alpha-D-ribose 1-diphosphate + AMP + H(+). It functions in the pathway metabolic intermediate biosynthesis; 5-phospho-alpha-D-ribose 1-diphosphate biosynthesis; 5-phospho-alpha-D-ribose 1-diphosphate from D-ribose 5-phosphate (route I): step 1/1. Involved in the biosynthesis of the central metabolite phospho-alpha-D-ribosyl-1-pyrophosphate (PRPP) via the transfer of pyrophosphoryl group from ATP to 1-hydroxyl of ribose-5-phosphate (Rib-5-P). This is Ribose-phosphate pyrophosphokinase from Methanothermobacter thermautotrophicus (strain ATCC 29096 / DSM 1053 / JCM 10044 / NBRC 100330 / Delta H) (Methanobacterium thermoautotrophicum).